Consider the following 174-residue polypeptide: Gamma-crystallin D (174 aa).

Beta/gamma crystallin 'Greek key' domains lie at 2-40 (GKIT…RVDS) and 41-83 (GCWM…RLIP). Residues 84-87 (HAGS) are connecting peptide. Beta/gamma crystallin 'Greek key' domains are found at residues 88-128 (HRLR…NVLE) and 129-171 (GSWV…RRVI).

This sequence belongs to the beta/gamma-crystallin family.

Functionally, crystallins are the dominant structural components of the vertebrate eye lens. The polypeptide is Gamma-crystallin D (CRYGD) (Bos taurus (Bovine)).